Consider the following 181-residue polypeptide: Translationally-controlled tumor protein homolog (181 aa).

One can recognise a TCTP domain in the interval 1 to 181 (MLIYKDIFTD…VKEAILEEKC (181 aa)).

The protein belongs to the TCTP family.

Its subcellular location is the cytoplasm. In terms of biological role, involved in calcium binding and microtubule stabilization. This chain is Translationally-controlled tumor protein homolog (tct-1), found in Caenorhabditis briggsae.